The sequence spans 412 residues: Phosphoglycerate kinase (412 aa).

(2R)-3-phosphoglycerate is bound by residues Val-20, Asp-21, Phe-22, Asn-23, Gln-35, Arg-36, Ser-59, His-60, Gly-62, Arg-63, Leu-118, Arg-119, His-166, and Arg-167. Position 210 (Gly-210) interacts with ADP. Gly-210 provides a ligand contact to CDP. Residues Ala-211 and Lys-212 each coordinate AMP. Ala-211 lines the ATP pocket. Ala-211 serves as a coordination point for Mg(2+). The Mg(2+) site is built by Ala-214 and Asp-215. A CDP-binding site is contributed by Asp-215. Lys-216 provides a ligand contact to AMP. Residue Lys-216 coordinates ATP. Gly-234 provides a ligand contact to ADP. Gly-234 is a CDP binding site. The AMP site is built by Gly-235 and Gly-308. ATP contacts are provided by Gly-235 and Gly-308. CDP-binding residues include Gly-333 and Phe-338. Residue Phe-338 coordinates ADP. Glu-339 is an AMP binding site. ATP-binding residues include Glu-339, Asp-370, and Thr-371. Asp-370 provides a ligand contact to Mg(2+).

This sequence belongs to the phosphoglycerate kinase family. In terms of assembly, monomer. The cofactor is Mg(2+).

Its subcellular location is the cytoplasm. The enzyme catalyses (2R)-3-phosphoglycerate + ATP = (2R)-3-phospho-glyceroyl phosphate + ADP. Its pathway is carbohydrate degradation; glycolysis; pyruvate from D-glyceraldehyde 3-phosphate: step 2/5. Functionally, catalyzes one of the two ATP producing reactions in the glycolytic pathway via the reversible conversion of 1,3-diphosphoglycerate to 3-phosphoglycerate. In addition to its role as a glycolytic enzyme, it seems that PGK-1 acts as a polymerase alpha cofactor protein (primer recognition protein). May play a role in sperm motility. The chain is Phosphoglycerate kinase (PGK) from Aplysia californica (California sea hare).